The chain runs to 471 residues: E3 SUMO-protein ligase EGR2 (471 aa).

A compositionally biased stretch (low complexity) spans 127–143 (PASTTASSNVTSASPNP). The interval 127–177 (PASTTASSNVTSASPNPLATGPLGVCTMSQTQPDLDHLYSPPPPPPYSGCA) is disordered. An N6-acetyllysine; by EP300 modification is found at K246. Disordered stretches follow at residues 273-301 (GGPSAGTTGPGASGGSEGPRLPGSSAAAA) and 313-336 (RPILRPRKYPNRPSKTPVHERPYP). A compositionally biased stretch (gly residues) spans 280–289 (TGPGASGGSE). 3 C2H2-type zinc fingers span residues 335-359 (YPCPAEGCDRRFSRSDELTRHIRIH), 365-387 (FQCRICMRNFSRSDHLTTHIRTH), and 393-415 (FACDYCGRKFARSDERKRHTKIH). The tract at residues 406–471 (DERKRHTKIH…GPCSSRTRTP (66 aa)) is disordered. A compositionally biased stretch (basic residues) spans 410-420 (RHTKIHLRQKE). The segment covering 424–437 (SAPSSSVPAASTAS) has biased composition (low complexity).

Belongs to the EGR C2H2-type zinc-finger protein family. As to quaternary structure, interacts with HCFC1. Interacts with WWP2. Interacts with UBC9. Interacts with CITED1. Interacts (via phosphorylated form) with SFN. Ubiquitinated by WWP2 leading to proteasomal degradation. In terms of processing, acetylated at Lys-246. May be deacetylated by HDAC6, HDAC10 or SIRT1.

The protein localises to the nucleus. It functions in the pathway protein modification; protein sumoylation. In terms of biological role, sequence-specific DNA-binding transcription factor. Plays a role in hindbrain segmentation by regulating the expression of a subset of homeobox containing genes and in Schwann cell myelination by regulating the expression of genes involved in the formation and maintenance of myelin. Binds to two EGR2-consensus sites EGR2A (5'-CTGTAGGAG-3') and EGR2B (5'-ATGTAGGTG-3') in the HOXB3 enhancer and promotes HOXB3 transcriptional activation. Binds to specific DNA sites located in the promoter region of HOXA4, HOXB2 and ERBB2. Regulates hindbrain segmentation by controlling the expression of Hox genes, such as HOXA4, HOXB3 and HOXB2, and thereby specifying odd and even rhombomeres. Promotes the expression of HOXB3 in the rhombomere r5 in the hindbrain. Regulates myelination in the peripheral nervous system after birth, possibly by regulating the expression of myelin proteins, such as MPZ, and by promoting the differentiation of Schwann cells. Involved in the development of the jaw openener musculature, probably by playing a role in its innervation through trigeminal motor neurons. May play a role in adipogenesis, possibly by regulating the expression of CEBPB. Functionally, E3 SUMO-protein ligase helping SUMO1 conjugation to its coregulators NAB1 and NAB2, whose sumoylation down-regulates EGR2 transcriptional activity. This Sus scrofa (Pig) protein is E3 SUMO-protein ligase EGR2 (EGR2).